The sequence spans 135 residues: Small ribosomal subunit protein eS24A (135 aa).

Residue Ser-2 is modified to N-acetylserine. Ser-14 carries the post-translational modification Phosphoserine. Lys-21 participates in a covalent cross-link: Glycyl lysine isopeptide (Lys-Gly) (interchain with G-Cter in ubiquitin). At Ser-56 the chain carries Phosphoserine. The tract at residues 102–135 is disordered; that stretch reads KASRQQRKQKKNRDKKIFGTGKRLAKKVARRNAD. Basic residues-rich tracts occupy residues 105–115 and 124–135; these read RQQRKQKKNRD and RLAKKVARRNAD.

It belongs to the eukaryotic ribosomal protein eS24 family. In terms of assembly, component of the small ribosomal subunit (SSU). Mature yeast ribosomes consist of a small (40S) and a large (60S) subunit. The 40S small subunit contains 1 molecule of ribosomal RNA (18S rRNA) and 33 different proteins (encoded by 57 genes). The large 60S subunit contains 3 rRNA molecules (25S, 5.8S and 5S rRNA) and 46 different proteins (encoded by 81 genes). Post-translationally, N-terminally acetylated by acetyltransferase NatA. Also partially acetylated by NatC.

The protein localises to the cytoplasm. Its function is as follows. Component of the ribosome, a large ribonucleoprotein complex responsible for the synthesis of proteins in the cell. The small ribosomal subunit (SSU) binds messenger RNAs (mRNAs) and translates the encoded message by selecting cognate aminoacyl-transfer RNA (tRNA) molecules. The large subunit (LSU) contains the ribosomal catalytic site termed the peptidyl transferase center (PTC), which catalyzes the formation of peptide bonds, thereby polymerizing the amino acids delivered by tRNAs into a polypeptide chain. The nascent polypeptides leave the ribosome through a tunnel in the LSU and interact with protein factors that function in enzymatic processing, targeting, and the membrane insertion of nascent chains at the exit of the ribosomal tunnel. The protein is Small ribosomal subunit protein eS24A of Saccharomyces cerevisiae (strain ATCC 204508 / S288c) (Baker's yeast).